A 563-amino-acid polypeptide reads, in one-letter code: Light-independent protochlorophyllide reductase subunit B (563 aa).

Residue Asp36 participates in [4Fe-4S] cluster binding. Asp293 acts as the Proton donor in catalysis. Residue 437-438 participates in substrate binding; it reads GM. The disordered stretch occupies residues 459 to 478; sequence ERREAEFGNQKVETGEPGTG.

It belongs to the ChlB/BchB/BchZ family. As to quaternary structure, protochlorophyllide reductase is composed of three subunits; BchL, BchN and BchB. Forms a heterotetramer of two BchB and two BchN subunits. [4Fe-4S] cluster is required as a cofactor.

The enzyme catalyses chlorophyllide a + oxidized 2[4Fe-4S]-[ferredoxin] + 2 ADP + 2 phosphate = protochlorophyllide a + reduced 2[4Fe-4S]-[ferredoxin] + 2 ATP + 2 H2O. It participates in porphyrin-containing compound metabolism; bacteriochlorophyll biosynthesis (light-independent). Its function is as follows. Component of the dark-operative protochlorophyllide reductase (DPOR) that uses Mg-ATP and reduced ferredoxin to reduce ring D of protochlorophyllide (Pchlide) to form chlorophyllide a (Chlide). This reaction is light-independent. The NB-protein (BchN-BchB) is the catalytic component of the complex. The polypeptide is Light-independent protochlorophyllide reductase subunit B (Roseiflexus castenholzii (strain DSM 13941 / HLO8)).